The chain runs to 617 residues: MALEPIDATTHSRDIEQEYQKVVRGTDNDTTWLIISPNTQKEYLPSSTGSSFSDFLQSFDETKVEYGIARVSPPGSDVGKIILVGWCPDSAPMKTRASFAANFGTIANSVLPGYHIQVTARDEDDLDEEELLTKISNAAGARYSIQAAGNSVPTSSASGSAPVKKVFTPSLAKKESEPKKSFVPPPVREEPVPVNVVKDNDADDWDEPEIKERNFETNPLSDNKPAYEPIGKIDLKKVIAEETAKEDPRLINRIDPSADIAHLKQESKIHRDNDLDNLLKQEKTSSPAVGGTKPPLVNLIFVEMIIVIRLYKVSRPEKSPAQLWAEKKMKQNQQSDSAQEEQKPVETKTEIEIGVDNSDEMKIGDLKSRFEKLGAETETEPEPPVQWETDSIPTVVKPQTFGQPAANSKPATQEVKKPFTPSNIGQRLPGMHTETPEHEEEDNDDDWGEDEDEPPKRNIPPPVMPARESAPQQPLPPRNTEPEPVEEGEEEEEEEEEEEEEAPAPSLPSRNAAPEPEPEQPQEEEEEEEAPAPSLPSRGSVPPPPPQRAVEPEEPAAEAPWATAEYDYEAGEDNELTFAENDKIINIEFVDDDWWLGELETTGQKGLFPSNYVVLGN.

One can recognise an ADF-H domain in the interval aspartate 7–serine 136. 2 disordered regions span residues proline 169–asparagine 223 and alanine 325–asparagine 574. The stretch at alanine 202 to lysine 211 is one 1-1 repeat. Residues alanine 202–glutamate 600 are 3 X 10 AA approximate repeats. 2 stretches are compositionally biased toward basic and acidic residues: residues glutamate 340–isoleucine 351 and aspartate 359–alanine 375. Residues threonine 400–alanine 411 show a composition bias toward polar residues. Composition is skewed to acidic residues over residues glutamate 437 to glutamate 453, glutamate 483 to alanine 502, and proline 516 to alanine 530. 4 repeat units span residues aspartate 444 to glutamate 453, glutamate 495 to arginine 510, glutamate 523 to arginine 538, and aspartate 591 to glutamate 600. The segment at glutamate 495–arginine 538 is 2 X 16 AA repeats of E(7)-A-P-A-P-S-L-P-S-R. Residues alanine 557–asparagine 617 form the SH3 domain.

The protein resides in the cytoplasm. Its subcellular location is the cytoskeleton. Functionally, may be involved in the spatial organization of cell surface growth. An overproduction of ABP1 causes the assembly of the cortical actin skeleton at inappropriate sites on the cell surface, resulting in delocalized surface growth. This is Actin-binding protein (ABP1) from Maudiozyma exigua (Yeast).